Consider the following 163-residue polypeptide: Crossover junction endodeoxyribonuclease RuvC (163 aa).

Residues D9, E76, and D148 contribute to the active site. 3 residues coordinate Mg(2+): D9, E76, and D148.

The protein belongs to the RuvC family. In terms of assembly, homodimer which binds Holliday junction (HJ) DNA. The HJ becomes 2-fold symmetrical on binding to RuvC with unstacked arms; it has a different conformation from HJ DNA in complex with RuvA. In the full resolvosome a probable DNA-RuvA(4)-RuvB(12)-RuvC(2) complex forms which resolves the HJ. The cofactor is Mg(2+).

The protein resides in the cytoplasm. The catalysed reaction is Endonucleolytic cleavage at a junction such as a reciprocal single-stranded crossover between two homologous DNA duplexes (Holliday junction).. The RuvA-RuvB-RuvC complex processes Holliday junction (HJ) DNA during genetic recombination and DNA repair. Endonuclease that resolves HJ intermediates. Cleaves cruciform DNA by making single-stranded nicks across the HJ at symmetrical positions within the homologous arms, yielding a 5'-phosphate and a 3'-hydroxyl group; requires a central core of homology in the junction. The consensus cleavage sequence is 5'-(A/T)TT(C/G)-3'. Cleavage occurs on the 3'-side of the TT dinucleotide at the point of strand exchange. HJ branch migration catalyzed by RuvA-RuvB allows RuvC to scan DNA until it finds its consensus sequence, where it cleaves and resolves the cruciform DNA. This Nostoc punctiforme (strain ATCC 29133 / PCC 73102) protein is Crossover junction endodeoxyribonuclease RuvC.